Consider the following 361-residue polypeptide: Alanine racemase (361 aa).

Lysine 34 serves as the catalytic Proton acceptor; specific for D-alanine. Residue lysine 34 is modified to N6-(pyridoxal phosphate)lysine. A substrate-binding site is contributed by arginine 129. The active-site Proton acceptor; specific for L-alanine is tyrosine 254. Methionine 302 serves as a coordination point for substrate.

Belongs to the alanine racemase family. The cofactor is pyridoxal 5'-phosphate.

It carries out the reaction L-alanine = D-alanine. The enzyme catalyses L-serine = D-serine. The protein operates within amino-acid biosynthesis; D-alanine biosynthesis; D-alanine from L-alanine: step 1/1. Functionally, catalyzes the interconversion of L-alanine and D-alanine. Likely plays an important role in supplying D-alanine, which is an indispensable constituent in the biosynthesis of bacterial cell-wall peptidoglycan. To a lesser extent, is also able to racemize L-serine and D-serine. Does not act on other proteinogenic amino-acids. The chain is Alanine racemase (alr1) from Vibrio cholerae serotype O1 (strain ATCC 39315 / El Tor Inaba N16961).